A 243-amino-acid chain; its full sequence is Pyridoxine 5'-phosphate synthase (243 aa).

N9 serves as a coordination point for 3-amino-2-oxopropyl phosphate. 11 to 12 (DH) is a binding site for 1-deoxy-D-xylulose 5-phosphate. A 3-amino-2-oxopropyl phosphate-binding site is contributed by R20. H45 functions as the Proton acceptor in the catalytic mechanism. The 1-deoxy-D-xylulose 5-phosphate site is built by R47 and H52. The Proton acceptor role is filled by E72. T102 provides a ligand contact to 1-deoxy-D-xylulose 5-phosphate. Catalysis depends on H193, which acts as the Proton donor. 3-amino-2-oxopropyl phosphate-binding positions include G194 and 215–216 (GH).

This sequence belongs to the PNP synthase family. Homooctamer; tetramer of dimers.

Its subcellular location is the cytoplasm. It catalyses the reaction 3-amino-2-oxopropyl phosphate + 1-deoxy-D-xylulose 5-phosphate = pyridoxine 5'-phosphate + phosphate + 2 H2O + H(+). It functions in the pathway cofactor biosynthesis; pyridoxine 5'-phosphate biosynthesis; pyridoxine 5'-phosphate from D-erythrose 4-phosphate: step 5/5. Functionally, catalyzes the complicated ring closure reaction between the two acyclic compounds 1-deoxy-D-xylulose-5-phosphate (DXP) and 3-amino-2-oxopropyl phosphate (1-amino-acetone-3-phosphate or AAP) to form pyridoxine 5'-phosphate (PNP) and inorganic phosphate. This Yersinia pestis protein is Pyridoxine 5'-phosphate synthase.